The primary structure comprises 623 residues: uncharacterized protein (623 aa).

Positions 256–351 (AEEKLLSKNK…EEIHGLKKKN (96 aa)) form a coiled coil. 2 disordered regions span residues 417 to 485 (NRRN…SPSS) and 497 to 536 (ALSSNGKKKTTRAIEDEEEEEDVKPENSNNNKKPENECAT). Over residues 422–431 (LESVPFNTLS) the composition is skewed to polar residues. Basic and acidic residues predominate over residues 452-481 (ELKKPAESYGDETKKPNQHNKDGSIDEKPK).

This is an uncharacterized protein from Arabidopsis thaliana (Mouse-ear cress).